A 1183-amino-acid chain; its full sequence is DNA-directed RNA polymerase subunit beta (1183 aa).

Belongs to the RNA polymerase beta chain family. As to quaternary structure, the RNAP catalytic core consists of 2 alpha, 1 beta, 1 beta' and 1 omega subunit. When a sigma factor is associated with the core the holoenzyme is formed, which can initiate transcription.

The enzyme catalyses RNA(n) + a ribonucleoside 5'-triphosphate = RNA(n+1) + diphosphate. Functionally, DNA-dependent RNA polymerase catalyzes the transcription of DNA into RNA using the four ribonucleoside triphosphates as substrates. The protein is DNA-directed RNA polymerase subunit beta of Staphylococcus aureus (strain JH9).